Consider the following 178-residue polypeptide: MKKRGKKPELDWETEEQEEIIWVSKSEIKRDAEELKKLGAKLVDLTKTNLDKIPLDGNLLEAVELARRSVKEAKRRQLQYIGKLLRNTDVEPIRDALDKIENKHNQQQAMLHKLELMRDELVSKGDEGLVALLIDYPQMDRRHLRNLIRSAQKEKEQNKPPKAYREIYQYLKDFIIEE.

The protein belongs to the DarP family.

It localises to the cytoplasm. Member of a network of 50S ribosomal subunit biogenesis factors which assembles along the 30S-50S interface, preventing incorrect 23S rRNA structures from forming. Promotes peptidyl transferase center (PTC) maturation. This is Dual-action ribosomal maturation protein DarP from Mannheimia succiniciproducens (strain KCTC 0769BP / MBEL55E).